Here is a 1256-residue protein sequence, read N- to C-terminus: Splicing factor, arginine/serine-rich 19 (1256 aa).

Disordered regions lie at residues 1–33, 158–343, 371–395, 408–1030, 1112–1152, and 1221–1256; these read MEEEDESRGKTEESGEDRGDGPPDRDPALSPSA, GKTV…APRR, ALSLPPLPPTDPEIEEGEIVQPEEE, PRQP…TLPP, GSLP…DKYL, and FRKHGRKPGDPPGPPRPPKEPGPPDKGGPGLPLPPL. Positions 7-27 are enriched in basic and acidic residues; that stretch reads SRGKTEESGEDRGDGPPDRDP. The segment covering 192 to 206 has biased composition (low complexity); the sequence is SSASSSPSPSPSSSS. Over residues 207–222 the composition is skewed to pro residues; that stretch reads PSPPPPPPPPPPPALP. Positions 227 to 236 are enriched in basic and acidic residues; that stretch reads DIYDPFHPTD. S240 is modified (phosphoserine). The span at 255–265 shows a compositional bias: polar residues; the sequence is TGSNPSSSAGT. Over residues 268 to 282 the composition is skewed to acidic residues; that stretch reads PEEEEEEEEEEEEEG. T328 is subject to Phosphothreonine. The span at 382 to 393 shows a compositional bias: acidic residues; the sequence is PEIEEGEIVQPE. Residues 412-424 show a composition bias toward low complexity; sequence PASVATLASVAAP. 2 positions are modified to phosphoserine: S442 and S447. Residues 478-489 are compositionally biased toward basic residues; sequence KILTQRRERYRQ. Phosphoserine is present on residues S491, S493, S510, S518, and S520. Basic residues-rich tracts occupy residues 538 to 553 and 560 to 577; these read TARRRSRSRSRRRSRS and RGGHRSRSREKRRRRRRS. S577 and S579 each carry phosphoserine. Basic residues predominate over residues 592–611; it reads RERHRGKRREGGKKKKKRSR. Positions 612-623 are enriched in basic and acidic residues; sequence SRAEKRSGDLEK. Phosphothreonine is present on T663. Phosphoserine is present on residues S676 and S682. The residue at position 689 (Y689) is a Phosphotyrosine. Residues S691 and S695 each carry the phosphoserine modification. Basic and acidic residues-rich tracts occupy residues 696–709 and 719–741; these read ADERGGKSDKDRRR and SREKGSRRKALDGDRGRDRDRSS. Low complexity-rich tracts occupy residues 752–775 and 793–804; these read PGSGPLPKAPPSSGSSSSSSSCSS and SSTTPAKDSSSS. Residue K812 forms a Glycyl lysine isopeptide (Lys-Gly) (interchain with G-Cter in SUMO2) linkage. Basic and acidic residues predominate over residues 813–831; sequence FSRDRESRSPFLKPDERAP. A phosphoserine mark is found at S819 and S821. Over residues 843-875 the composition is skewed to basic residues; it reads KPKKTKAKAKAGAKKAKGTKGKTKPSKTRKKVR. Phosphoserine is present on residues S876, S883, S910, and S912. Pro residues predominate over residues 922-935; the sequence is STPPPKVAPPPPAL. 2 positions are modified to phosphothreonine: T923 and T936. Positions 938–947 are enriched in polar residues; it reads DSQTVDSSCK. S939 bears the Phosphoserine mark. The residue at position 948 (T948) is a Phosphothreonine. A compositionally biased stretch (acidic residues) spans 969 to 984; the sequence is EEEEEEEEEEEEEEEQ. The segment covering 985–1017 has biased composition (low complexity); sequence QPATTTATSTAAAAPSTAPSAGSTAGDSGAEDG. Positions 1131–1256 are necessary for interaction with the CTD domain of POLR2A; the sequence is PASDKREGSS…GGPGLPLPPL (126 aa). Over residues 1133–1152 the composition is skewed to basic and acidic residues; that stretch reads SDKREGSSSSEGRGDTDKYL. Over residues 1244–1256 the composition is skewed to pro residues; sequence PDKGGPGLPLPPL.

The protein belongs to the splicing factor SR family. In terms of assembly, interacts with POLR2A.

Its subcellular location is the nucleus. May function in pre-mRNA splicing. The protein is Splicing factor, arginine/serine-rich 19 (Scaf1) of Mus musculus (Mouse).